The following is a 490-amino-acid chain: 23S rRNA (uracil(1939)-C(5))-methyltransferase RlmD (490 aa).

The TRAM domain maps to 14–75; that stretch reads APAPAEYPID…SSFEKATLTA (62 aa). 4 residues coordinate [4Fe-4S] cluster: Cys-88, Cys-98, Cys-101, and Cys-180. The S-adenosyl-L-methionine site is built by Gln-289, Phe-318, Asn-323, Glu-339, Asn-374, and Asp-395. Cys-446 serves as the catalytic Nucleophile.

This sequence belongs to the class I-like SAM-binding methyltransferase superfamily. RNA M5U methyltransferase family. RlmD subfamily.

It catalyses the reaction uridine(1939) in 23S rRNA + S-adenosyl-L-methionine = 5-methyluridine(1939) in 23S rRNA + S-adenosyl-L-homocysteine + H(+). Its function is as follows. Catalyzes the formation of 5-methyl-uridine at position 1939 (m5U1939) in 23S rRNA. This Polaromonas naphthalenivorans (strain CJ2) protein is 23S rRNA (uracil(1939)-C(5))-methyltransferase RlmD.